A 308-amino-acid chain; its full sequence is Acetaldehyde dehydrogenase 1 (308 aa).

10 to 13 (SGNI) serves as a coordination point for NAD(+). Cysteine 128 (acyl-thioester intermediate) is an active-site residue. NAD(+)-binding positions include 159-167 (SAGPGTRAN) and asparagine 285.

Belongs to the acetaldehyde dehydrogenase family.

It carries out the reaction acetaldehyde + NAD(+) + CoA = acetyl-CoA + NADH + H(+). This Salinispora arenicola (strain CNS-205) protein is Acetaldehyde dehydrogenase 1.